Here is a 335-residue protein sequence, read N- to C-terminus: Calcium-binding protein TgpCaBP (335 aa).

The helical transmembrane segment at 30–50 (LPLCVFSLFLFSFAFSALSGA) threads the bilayer. EF-hand domains are found at residues 113 to 148 (MHQH…SLDQ), 153 to 188 (QHKK…GKDE), 190 to 225 (LMKI…GSLN), and 227 to 262 (VEKT…PHSH). Residues Asp126, Asp128, Asp130, Lys132, Glu137, Asp166, Asp168, Asp170, Glu177, Asp203, Asn205, Asp207, Lys209, Glu214, Asp240, Asn242, Asp244, and Glu251 each coordinate Ca(2+). The Prevents secretion from ER signature appears at 332-335 (HDEL).

It is found in the endoplasmic reticulum membrane. Its subcellular location is the cytoplasm. The protein localises to the cytosol. Functionally, calcium-binding protein. Participates in the efflux of intracellular Ca(2+) and storage of Ca(2+) in the endoplasmic reticulum. Required for gliding, host cell invasion and egress. Required for microneme secretion. This chain is Calcium-binding protein TgpCaBP, found in Toxoplasma gondii.